Here is a 370-residue protein sequence, read N- to C-terminus: Dual-specificity RNA methyltransferase RlmN (370 aa).

The Proton acceptor role is filled by Glu-93. In terms of domain architecture, Radical SAM core spans 99–337; it reads EEGRGTLCVS…VTTVRKTRGD (239 aa). Cysteines 106 and 343 form a disulfide. [4Fe-4S] cluster is bound by residues Cys-113, Cys-117, and Cys-120. S-adenosyl-L-methionine is bound by residues 167-168, Ser-199, 221-223, and Asn-300; these read GE and SLH. Cys-343 serves as the catalytic S-methylcysteine intermediate.

The protein belongs to the radical SAM superfamily. RlmN family. The cofactor is [4Fe-4S] cluster.

Its subcellular location is the cytoplasm. The enzyme catalyses adenosine(2503) in 23S rRNA + 2 reduced [2Fe-2S]-[ferredoxin] + 2 S-adenosyl-L-methionine = 2-methyladenosine(2503) in 23S rRNA + 5'-deoxyadenosine + L-methionine + 2 oxidized [2Fe-2S]-[ferredoxin] + S-adenosyl-L-homocysteine. The catalysed reaction is adenosine(37) in tRNA + 2 reduced [2Fe-2S]-[ferredoxin] + 2 S-adenosyl-L-methionine = 2-methyladenosine(37) in tRNA + 5'-deoxyadenosine + L-methionine + 2 oxidized [2Fe-2S]-[ferredoxin] + S-adenosyl-L-homocysteine. Its function is as follows. Specifically methylates position 2 of adenine 2503 in 23S rRNA and position 2 of adenine 37 in tRNAs. m2A2503 modification seems to play a crucial role in the proofreading step occurring at the peptidyl transferase center and thus would serve to optimize ribosomal fidelity. The protein is Dual-specificity RNA methyltransferase RlmN of Francisella tularensis subsp. novicida (strain U112).